The chain runs to 432 residues: Adenylosuccinate synthetase (432 aa).

GTP is bound by residues 13–19 and 41–43; these read GDEGKGK and GHT. The active-site Proton acceptor is Asp14. Mg(2+) is bound by residues Asp14 and Gly41. IMP is bound by residues 14 to 17, 39 to 42, Thr130, Arg144, Gln225, Thr240, and Arg304; these read DEGK and NAGH. His42 serves as the catalytic Proton donor. 300–306 is a substrate binding site; that stretch reads ATTGRRR. GTP-binding positions include Arg306, 332 to 334, and 414 to 416; these read KLD and STG.

This sequence belongs to the adenylosuccinate synthetase family. Homodimer. Mg(2+) is required as a cofactor.

It is found in the cytoplasm. It carries out the reaction IMP + L-aspartate + GTP = N(6)-(1,2-dicarboxyethyl)-AMP + GDP + phosphate + 2 H(+). Its pathway is purine metabolism; AMP biosynthesis via de novo pathway; AMP from IMP: step 1/2. In terms of biological role, plays an important role in the de novo pathway of purine nucleotide biosynthesis. Catalyzes the first committed step in the biosynthesis of AMP from IMP. The polypeptide is Adenylosuccinate synthetase (Methylococcus capsulatus (strain ATCC 33009 / NCIMB 11132 / Bath)).